The following is a 562-amino-acid chain: Tissue-type plasminogen activator (562 aa).

Positions 1 to 20 (MNAMKRGLCCVLLLCGAVFA) are cleaved as a signal peptide. Residues 21-32 (LPSQEIHARVRR) constitute a propeptide that is removed on maturation. The propeptide at 33 to 35 (GAR) is removed by plasmin. The Fibronectin type-I domain occupies 39-81 (VICRDEKTQMIYQQHQSWLRPVLRSNRVEYCWCNSGRAQCHSV). Disulfide bonds link Cys41–Cys71, Cys69–Cys78, Cys86–Cys97, Cys91–Cys108, Cys110–Cys119, Cys127–Cys208, Cys148–Cys190, Cys179–Cys203, Cys215–Cys296, Cys236–Cys278, Cys267–Cys291, Cys299–Cys430, Cys342–Cys358, Cys350–Cys419, Cys444–Cys519, Cys476–Cys492, and Cys509–Cys537. Positions 42–52 (RDEKTQMIYQQ) are important for binding to annexin A2. The 39-residue stretch at 82 to 120 (PVRSCSEPRCFNGGTCQQALYFSDFVCQCPEGFAGKCCE) folds into the EGF-like domain. Thr96 is a glycosylation site (O-linked (Fuc) threonine). Kringle domains lie at 126–208 (TCYE…TPAC) and 214–296 (DCYF…VPSC). An N-linked (GlcNAc...) asparagine glycan is attached at Asn152. The 251-residue stretch at 311–561 (IKGGLFADIA…YLDWIHDNMR (251 aa)) folds into the Peptidase S1 domain. Catalysis depends on charge relay system residues His357 and Asp406. A glycan (N-linked (GlcNAc...) asparagine) is linked at Asn483. The Charge relay system role is filled by Ser513.

This sequence belongs to the peptidase S1 family. As to quaternary structure, heterodimer of chain A and chain B held by a disulfide bond. Binds to fibrin with high affinity. This interaction leads to an increase in the catalytic efficiency of the enzyme due to an increase in affinity for plasminogen. Similarly, binding to heparin increases the activation of plasminogen. Binds to annexin A2, cytokeratin-8, fibronectin and laminin. Binds to mannose receptor and the low-density lipoprotein receptor-related protein (LRP1); these proteins are involved in TPA clearance. Binds LRP1B; binding is followed by internalization and degradation. Forms heterodimer with SERPINA5. Interacts with SERPINE1. In complex with SERPINE1, interacts with SORL1. The single chain, almost fully active enzyme, can be further processed into a two-chain fully active form by a cleavage after Arg-310 catalyzed by plasmin, tissue kallikrein or factor Xa.

Its subcellular location is the secreted. It is found in the extracellular space. The enzyme catalyses Specific cleavage of Arg-|-Val bond in plasminogen to form plasmin.. Its activity is regulated as follows. Inhibited by SERPINA5. Inhibited by SERPINE1. Its function is as follows. Converts the abundant, but inactive, zymogen plasminogen to plasmin by hydrolyzing a single Arg-Val bond in plasminogen. By controlling plasmin-mediated proteolysis, it plays an important role in tissue remodeling and degradation, in cell migration and many other physiopathological events. During oocyte activation, plays a role in cortical granule reaction in the zona reaction, which contributes to the block to polyspermy. This is Tissue-type plasminogen activator (PLAT) from Pongo abelii (Sumatran orangutan).